A 220-amino-acid polypeptide reads, in one-letter code: Ribonuclease HII (220 aa).

The 194-residue stretch at 27–220 folds into the RNase H type-2 domain; that stretch reads CIIVGVDEVG…SKISYMFKNS (194 aa). D33, E34, and D128 together coordinate a divalent metal cation.

Belongs to the RNase HII family. Mn(2+) serves as cofactor. Mg(2+) is required as a cofactor.

The protein localises to the cytoplasm. The enzyme catalyses Endonucleolytic cleavage to 5'-phosphomonoester.. Functionally, endonuclease that specifically degrades the RNA of RNA-DNA hybrids. This chain is Ribonuclease HII, found in Ehrlichia ruminantium (strain Gardel).